Consider the following 218-residue polypeptide: Protein-L-isoaspartate O-methyltransferase (218 aa).

The active site involves Ser-69.

Belongs to the methyltransferase superfamily. L-isoaspartyl/D-aspartyl protein methyltransferase family.

It is found in the cytoplasm. It catalyses the reaction [protein]-L-isoaspartate + S-adenosyl-L-methionine = [protein]-L-isoaspartate alpha-methyl ester + S-adenosyl-L-homocysteine. Its function is as follows. Catalyzes the methyl esterification of L-isoaspartyl residues in peptides and proteins that result from spontaneous decomposition of normal L-aspartyl and L-asparaginyl residues. It plays a role in the repair and/or degradation of damaged proteins. This is Protein-L-isoaspartate O-methyltransferase from Aromatoleum aromaticum (strain DSM 19018 / LMG 30748 / EbN1) (Azoarcus sp. (strain EbN1)).